Consider the following 400-residue polypeptide: MQELGKVESNSIRVTRQDDKRITIEKDLDTEHMVLSMGPQHPSTHGVLRLECITDGEVIVEAEPYLGYLHRCFEKHCENVDYPGIVPYTDRMDYLAGMNSELAYCLTVEKLLDIEIPRRVEFIRVITSELNRIASHLVAIGTYAIDLGAFTPFLFCFRDREHIMNLLEWISGARMLYNYIWIGGLAYDVPADFKKRVAEFVTYFRPKAVELYKLLTENEIFVKRTKGIGIMPADVAINFAWSGPMLRGSGVKWDLRRNDPYSVYPELDFEVPVPDGKFSDVGDCLSRHLVRALEMEESLKIIEQCLDKMPEEQGFDPRALIPKKIRPKAGEVYGRAENPRGELGYYIVSDGKSTKPVRCKARSSCFVNLAAMKDLSKGQLLPDLVAIIGSIDIVLGEVDR.

The protein belongs to the complex I 49 kDa subunit family. NDH-1 is composed of 14 different subunits. Subunits NuoB, C, D, E, F, and G constitute the peripheral sector of the complex.

It localises to the cell inner membrane. It catalyses the reaction a quinone + NADH + 5 H(+)(in) = a quinol + NAD(+) + 4 H(+)(out). In terms of biological role, NDH-1 shuttles electrons from NADH, via FMN and iron-sulfur (Fe-S) centers, to quinones in the respiratory chain. The immediate electron acceptor for the enzyme in this species is believed to be a menaquinone. Couples the redox reaction to proton translocation (for every two electrons transferred, four hydrogen ions are translocated across the cytoplasmic membrane), and thus conserves the redox energy in a proton gradient. In Chlorobaculum parvum (strain DSM 263 / NCIMB 8327) (Chlorobium vibrioforme subsp. thiosulfatophilum), this protein is NADH-quinone oxidoreductase subunit D.